The following is a 508-amino-acid chain: Maturase K (508 aa).

This sequence belongs to the intron maturase 2 family. MatK subfamily.

It is found in the plastid. It localises to the chloroplast. In terms of biological role, usually encoded in the trnK tRNA gene intron. Probably assists in splicing its own and other chloroplast group II introns. The polypeptide is Maturase K (Huidobria chilensis (Loasa chilensis)).